The following is a 232-amino-acid chain: Large ribosomal subunit protein uL1 (232 aa).

This sequence belongs to the universal ribosomal protein uL1 family. As to quaternary structure, part of the 50S ribosomal subunit.

Functionally, binds directly to 23S rRNA. The L1 stalk is quite mobile in the ribosome, and is involved in E site tRNA release. In terms of biological role, protein L1 is also a translational repressor protein, it controls the translation of the L11 operon by binding to its mRNA. This chain is Large ribosomal subunit protein uL1, found in Burkholderia mallei (strain NCTC 10247).